Consider the following 398-residue polypeptide: Acetate kinase (398 aa).

Residue N7 coordinates Mg(2+). K14 contributes to the ATP binding site. R91 lines the substrate pocket. D148 (proton donor/acceptor) is an active-site residue. Residues 208-212 (HLGNG), 283-285 (DSR), and 331-335 (GIGEN) contribute to the ATP site. E384 is a Mg(2+) binding site.

This sequence belongs to the acetokinase family. Homodimer. The cofactor is Mg(2+). It depends on Mn(2+) as a cofactor.

It is found in the cytoplasm. It carries out the reaction acetate + ATP = acetyl phosphate + ADP. It functions in the pathway metabolic intermediate biosynthesis; acetyl-CoA biosynthesis; acetyl-CoA from acetate: step 1/2. Catalyzes the formation of acetyl phosphate from acetate and ATP. Can also catalyze the reverse reaction. This is Acetate kinase from Halothermothrix orenii (strain H 168 / OCM 544 / DSM 9562).